The primary structure comprises 266 residues: 26 kDa endochitinase 2 (266 aa).

A signal peptide spans 1–23 (MRSLAVVVAVVATVAMAIGTARG). Intrachain disulfides connect Cys46/Cys108, Cys120/Cys128, and Cys227/Cys259. Catalysis depends on Glu90, which acts as the Proton donor.

The protein belongs to the glycosyl hydrolase 19 family. Chitinase class II subfamily.

The enzyme catalyses Random endo-hydrolysis of N-acetyl-beta-D-glucosaminide (1-&gt;4)-beta-linkages in chitin and chitodextrins.. Defense against chitin-containing fungal pathogens. This chain is 26 kDa endochitinase 2, found in Hordeum vulgare (Barley).